The primary structure comprises 183 residues: Putative 3-methyladenine DNA glycosylase (183 aa).

This sequence belongs to the DNA glycosylase MPG family.

The polypeptide is Putative 3-methyladenine DNA glycosylase (Rickettsia peacockii (strain Rustic)).